A 61-amino-acid polypeptide reads, in one-letter code: Small ribosomal subunit protein uS14 (61 aa).

Zn(2+) contacts are provided by cysteine 24, cysteine 27, cysteine 40, and cysteine 43.

The protein belongs to the universal ribosomal protein uS14 family. Zinc-binding uS14 subfamily. Part of the 30S ribosomal subunit. Contacts proteins S3 and S10. The cofactor is Zn(2+).

In terms of biological role, binds 16S rRNA, required for the assembly of 30S particles and may also be responsible for determining the conformation of the 16S rRNA at the A site. This Syntrophotalea carbinolica (strain DSM 2380 / NBRC 103641 / GraBd1) (Pelobacter carbinolicus) protein is Small ribosomal subunit protein uS14.